A 238-amino-acid chain; its full sequence is Ion-translocating oxidoreductase complex subunit E (238 aa).

5 helical membrane-spanning segments follow: residues 41-61, 71-91, 95-115, 130-150, and 184-204; these read LGLG…VSLV, LPAF…LMQA, ELYQ…VILG, SFDG…LGGL, and GFLL…LIAL.

The protein belongs to the NqrDE/RnfAE family. The complex is composed of six subunits: RnfA, RnfB, RnfC, RnfD, RnfE and RnfG.

It localises to the cell inner membrane. Part of a membrane-bound complex that couples electron transfer with translocation of ions across the membrane. The sequence is that of Ion-translocating oxidoreductase complex subunit E from Pseudomonas aeruginosa (strain LESB58).